We begin with the raw amino-acid sequence, 741 residues long: Transketolase-1, chloroplastic (741 aa).

The N-terminal 66 residues, 1-66 (MASTSSLALS…NRSLRPLVRA (66 aa)), are a transit peptide targeting the chloroplast. Residues 22–51 (GSDQRGSLPAFSGLKSTGSRASASSRRRIA) are disordered. A67 is modified (N-acetylalanine). Substrate is bound at residue H103. Thiamine diphosphate contacts are provided by residues H143 and 192–194 (GPL). D233 provides a ligand contact to Mg(2+). Thiamine diphosphate contacts are provided by G234 and N263. Positions 263 and 265 each coordinate Mg(2+). H340 contacts substrate. Position 340 (H340) interacts with thiamine diphosphate. Phosphoserine is present on S428. Residues R434 and S461 each coordinate substrate. 2 residues coordinate thiamine diphosphate: E488 and F515. Residue E488 is the Proton donor of the active site. Residues H539, D547, and R598 each contribute to the substrate site.

Belongs to the transketolase family. As to quaternary structure, homodimer. Mg(2+) is required as a cofactor. Ca(2+) serves as cofactor. It depends on Mn(2+) as a cofactor. Requires Co(2+) as cofactor. The cofactor is thiamine diphosphate.

The protein resides in the plastid. The protein localises to the chloroplast stroma. The catalysed reaction is D-sedoheptulose 7-phosphate + D-glyceraldehyde 3-phosphate = aldehydo-D-ribose 5-phosphate + D-xylulose 5-phosphate. Its pathway is carbohydrate biosynthesis; Calvin cycle. In terms of biological role, catalyzes the reversible transfer of a two-carbon ketol group from fructose-6-phosphate or sedoheptulose-7-phosphate to glyceraldehyde-3-phosphate to yield xylulose-5-phosphate and erythrose-4-phosphate or ribose-5-phosphate, respectively. Could act as a stress sensor involved in adaptation process. This chain is Transketolase-1, chloroplastic (TKL-1), found in Arabidopsis thaliana (Mouse-ear cress).